Here is a 154-residue protein sequence, read N- to C-terminus: Protein X (154 aa).

The segment at 68 to 117 (PCALRFTSARRMETTVNANQVLPKVLHKRTLGLSALSTTDLEAYFKDCVF) is mitochondrial targeting sequence.

It belongs to the orthohepadnavirus protein X family. May form homodimer. May interact with host CEBPA, CFLAR, CREB1, DDB1, E4F1, HBXIP, HSPD1/HSP60, NFKBIA, POLR2E and SMAD4. Interacts with host SMC5-SMC6 complex and induces its degradation. Interacts with host TRPC4AP; leading to prevent ubiquitination of TRPC4AP. Interacts with host PLSCR1; this interaction promotes ubiquitination and degradation of HBx and impairs HBx-mediated cell proliferation. A fraction may be phosphorylated in insect cells and HepG2 cells, a human hepatoblastoma cell line. Phosphorylated in vitro by host protein kinase C or mitogen-activated protein kinase. N-acetylated in insect cells.

Its subcellular location is the host cytoplasm. It localises to the host nucleus. The protein localises to the host mitochondrion. Multifunctional protein that plays a role in silencing host antiviral defenses and promoting viral transcription. Does not seem to be essential for HBV infection. May be directly involved in development of cirrhosis and liver cancer (hepatocellular carcinoma). Most of cytosolic activities involve modulation of cytosolic calcium. The effect on apoptosis is controversial depending on the cell types in which the studies have been conducted. May induce apoptosis by localizing in mitochondria and causing loss of mitochondrial membrane potential. May also modulate apoptosis by binding host CFLAR, a key regulator of the death-inducing signaling complex (DISC). Promotes viral transcription by using the host E3 ubiquitin ligase DDB1 to target the SMC5-SMC6 complex to proteasomal degradation. This host complex would otherwise bind to viral episomal DNA, and prevents its transcription. Moderately stimulates transcription of many different viral and cellular transcription elements. Promoters and enhancers stimulated by HBx contain DNA binding sites for NF-kappa-B, AP-1, AP-2, c-EBP, ATF/CREB, or the calcium-activated factor NF-AT. This chain is Protein X, found in Homo sapiens (Human).